The primary structure comprises 116 residues: Ribosome-binding factor A (116 aa).

It belongs to the RbfA family. As to quaternary structure, monomer. Binds 30S ribosomal subunits, but not 50S ribosomal subunits or 70S ribosomes.

It is found in the cytoplasm. In terms of biological role, one of several proteins that assist in the late maturation steps of the functional core of the 30S ribosomal subunit. Associates with free 30S ribosomal subunits (but not with 30S subunits that are part of 70S ribosomes or polysomes). Required for efficient processing of 16S rRNA. May interact with the 5'-terminal helix region of 16S rRNA. This chain is Ribosome-binding factor A, found in Streptococcus pyogenes serotype M5 (strain Manfredo).